The primary structure comprises 276 residues: Formamidopyrimidine-DNA glycosylase (276 aa).

P2 functions as the Schiff-base intermediate with DNA in the catalytic mechanism. E3 functions as the Proton donor in the catalytic mechanism. K59 serves as the catalytic Proton donor; for beta-elimination activity. H92, R111, and K155 together coordinate DNA. The segment at 239 to 273 adopts an FPG-type zinc-finger fold; that stretch reads AVYGQTGAPCPRCGTAIEKIKVGGRGTHFCPTCQQ. R263 acts as the Proton donor; for delta-elimination activity in catalysis.

This sequence belongs to the FPG family. As to quaternary structure, monomer. Zn(2+) is required as a cofactor.

It catalyses the reaction Hydrolysis of DNA containing ring-opened 7-methylguanine residues, releasing 2,6-diamino-4-hydroxy-5-(N-methyl)formamidopyrimidine.. The catalysed reaction is 2'-deoxyribonucleotide-(2'-deoxyribose 5'-phosphate)-2'-deoxyribonucleotide-DNA = a 3'-end 2'-deoxyribonucleotide-(2,3-dehydro-2,3-deoxyribose 5'-phosphate)-DNA + a 5'-end 5'-phospho-2'-deoxyribonucleoside-DNA + H(+). Functionally, involved in base excision repair of DNA damaged by oxidation or by mutagenic agents. Acts as a DNA glycosylase that recognizes and removes damaged bases. Has a preference for oxidized purines, such as 7,8-dihydro-8-oxoguanine (8-oxoG). Has AP (apurinic/apyrimidinic) lyase activity and introduces nicks in the DNA strand. Cleaves the DNA backbone by beta-delta elimination to generate a single-strand break at the site of the removed base with both 3'- and 5'-phosphates. The chain is Formamidopyrimidine-DNA glycosylase from Exiguobacterium sibiricum (strain DSM 17290 / CCUG 55495 / CIP 109462 / JCM 13490 / 255-15).